The following is a 755-amino-acid chain: Thermostable beta-glucosidase B (755 aa).

Residue D231 is part of the active site.

It belongs to the glycosyl hydrolase 3 family.

The catalysed reaction is Hydrolysis of terminal, non-reducing beta-D-glucosyl residues with release of beta-D-glucose.. Its pathway is glycan metabolism; cellulose degradation. This Acetivibrio thermocellus (strain ATCC 27405 / DSM 1237 / JCM 9322 / NBRC 103400 / NCIMB 10682 / NRRL B-4536 / VPI 7372) (Clostridium thermocellum) protein is Thermostable beta-glucosidase B (bglB).